The primary structure comprises 697 residues: Elongation factor G 2 (697 aa).

The tr-type G domain occupies 5–280 (SKYRNIGIFA…AVVDYLPDPV (276 aa)). GTP is bound by residues 14–21 (AHVDAGKT), 78–82 (DTPGH), and 132–135 (NKLD).

Belongs to the TRAFAC class translation factor GTPase superfamily. Classic translation factor GTPase family. EF-G/EF-2 subfamily.

It localises to the cytoplasm. Functionally, catalyzes the GTP-dependent ribosomal translocation step during translation elongation. During this step, the ribosome changes from the pre-translocational (PRE) to the post-translocational (POST) state as the newly formed A-site-bound peptidyl-tRNA and P-site-bound deacylated tRNA move to the P and E sites, respectively. Catalyzes the coordinated movement of the two tRNA molecules, the mRNA and conformational changes in the ribosome. In Shewanella frigidimarina (strain NCIMB 400), this protein is Elongation factor G 2.